The following is a 368-amino-acid chain: UPF0284 protein Tery_1555 (368 aa).

The protein belongs to the UPF0284 family.

This Trichodesmium erythraeum (strain IMS101) protein is UPF0284 protein Tery_1555.